A 216-amino-acid chain; its full sequence is NKG2-D type II integral membrane protein (216 aa).

Residues 1 to 51 lie on the Cytoplasmic side of the membrane; sequence MGWIRGRRSRHSWEMSEFHNYNLDLAKNDFSTRWQKQRCPVIKSKCRENTS. Residues 52-72 traverse the membrane as a helical; Signal-anchor for type II membrane protein segment; sequence PLFFCCFIAVAMGIRFIVMVT. Residues 73-216 are Extracellular-facing; it reads IWSAVFLNSL…NTYICMQRTV (144 aa). 2 disulfide bridges follow: cysteine 96–cysteine 105 and cysteine 99–cysteine 110. Positions 98–213 constitute a C-type lectin domain; the sequence is PCPKNWICYK…STPNTYICMQ (116 aa). 4 N-linked (GlcNAc...) asparagine glycosylation sites follow: asparagine 115, asparagine 131, asparagine 163, and asparagine 202. 2 disulfide bridges follow: cysteine 127–cysteine 211 and cysteine 189–cysteine 203.

Homodimer; disulfide-linked. Heterohexamer composed of two subunits of KLRK1 and four subunits of HCST/DAP10. Interacts (via transmembrane domain) with HCST/DAP10 (via transmembrane domain); the interaction is required for KLRK1 NK cell surface and induces NK cell-mediated cytotoxicity. Can form disulfide-bonded heterodimer with CD94. Interacts with CEACAM1; recruits PTPN6 that dephosphorylates VAV1.

It localises to the cell membrane. In terms of biological role, functions as an activating and costimulatory receptor involved in immunosurveillance upon binding to various cellular stress-inducible ligands displayed at the surface of autologous tumor cells and virus-infected cells. Provides both stimulatory and costimulatory innate immune responses on activated killer (NK) cells, leading to cytotoxic activity. Acts as a costimulatory receptor for T-cell receptor (TCR) in CD8(+) T-cell-mediated adaptive immune responses by amplifying T-cell activation. Stimulates perforin-mediated elimination of ligand-expressing tumor cells. Signaling involves calcium influx, culminating in the expression of TNF-alpha. Participates in NK cell-mediated bone marrow graft rejection. May play a regulatory role in differentiation and survival of NK cells. Binds to ligands belonging to various subfamilies of MHC class I-related glycoproteins. In Pongo pygmaeus (Bornean orangutan), this protein is NKG2-D type II integral membrane protein (KLRK1).